The primary structure comprises 176 residues: Nascent polypeptide-associated complex subunit alpha (176 aa).

Residues 16-80 form the NAC-A/B domain; that stretch reads PKNEKKAREL…AKVDDMNQRI (65 aa). The tract at residues 83 to 110 is disordered; that stretch reads AQAAQAAETDAHAGHTHSHGEEDKSPEA. The segment covering 91-110 has biased composition (basic and acidic residues); that stretch reads TDAHAGHTHSHGEEDKSPEA. In terms of domain architecture, UBA spans 138–175; it reads LDAKDIDIIVEQTQVSRAKAVKALRKHDGDMVNAIMEL.

It belongs to the NAC-alpha family. Part of the nascent polypeptide-associated complex (NAC), consisting of EGD2 and EGD1. NAC associates with ribosomes via EGD1.

Its subcellular location is the cytoplasm. It localises to the nucleus. Its function is as follows. Component of the nascent polypeptide-associated complex (NAC), a dynamic component of the ribosomal exit tunnel, protecting the emerging polypeptides from interaction with other cytoplasmic proteins to ensure appropriate nascent protein targeting. The NAC complex also promotes mitochondrial protein import by enhancing productive ribosome interactions with the outer mitochondrial membrane and blocks the inappropriate interaction of ribosomes translating non-secretory nascent polypeptides with translocation sites in the membrane of the endoplasmic reticulum. EGD2 may also be involved in transcription regulation. The sequence is that of Nascent polypeptide-associated complex subunit alpha (EGD2) from Scheffersomyces stipitis (strain ATCC 58785 / CBS 6054 / NBRC 10063 / NRRL Y-11545) (Yeast).